A 51-amino-acid chain; its full sequence is Large ribosomal subunit protein bL33 (51 aa).

The protein belongs to the bacterial ribosomal protein bL33 family.

The protein is Large ribosomal subunit protein bL33 of Nitrosococcus oceani (strain ATCC 19707 / BCRC 17464 / JCM 30415 / NCIMB 11848 / C-107).